A 331-amino-acid chain; its full sequence is MVSVGIVGTGSYVPDKVLTNFDLEQMVDTNDQWIVSRTGIKERHIAEPETPVSELCYQAAVRALEDAKLAPEELDLVIVATITPDFVFPATACLVAERLGAKKAAGFDLQAACTGFLYGVATAAQFIATGIYKNALVIGGETLSKILNWEDRGTCILFGDGAGAAVLQQVEEGYGFLGYDLGMDGAGGSLLTMPGGGSMHPASAETVAKKMHTIQMAGSEVFKFAVRIMGETALKALDKAGLGIGDVDCLIPHQANTRIVDAAVKRLGIDAGKVVVNLDRYGNMSAASIPVALDEAARSGRLNYGDIMVMVGFGGGLTWGAAVVKWSKRGV.

Active-site residues include cysteine 113 and histidine 253. Residues 254-258 (QANTR) form an ACP-binding region. The active site involves asparagine 283.

Belongs to the thiolase-like superfamily. FabH family. Homodimer.

The protein resides in the cytoplasm. The enzyme catalyses malonyl-[ACP] + acetyl-CoA + H(+) = 3-oxobutanoyl-[ACP] + CO2 + CoA. The protein operates within lipid metabolism; fatty acid biosynthesis. In terms of biological role, catalyzes the condensation reaction of fatty acid synthesis by the addition to an acyl acceptor of two carbons from malonyl-ACP. Catalyzes the first condensation reaction which initiates fatty acid synthesis and may therefore play a role in governing the total rate of fatty acid production. Possesses both acetoacetyl-ACP synthase and acetyl transacylase activities. Its substrate specificity determines the biosynthesis of branched-chain and/or straight-chain of fatty acids. The chain is Beta-ketoacyl-[acyl-carrier-protein] synthase III from Desulfitobacterium hafniense (strain Y51).